Here is a 181-residue protein sequence, read N- to C-terminus: Transcription termination/antitermination protein NusG (181 aa).

Residues 130–161 (PGEMVRVNDGPFADFNGVVEEVDYEKSRLKVS) enclose the KOW domain.

This sequence belongs to the NusG family. Monomer. Interacts with the transcription termination factor Rho and with RNA polymerase.

Functionally, participates in transcription elongation, termination and antitermination. In the absence of Rho, increases the rate of transcription elongation by the RNA polymerase (RNAP), probably by partially suppressing pausing. In the presence of Rho, modulates most Rho-dependent termination events by interacting with the RNAP to render the complex more susceptible to the termination activity of Rho. May be required to overcome a kinetic limitation of Rho to function at certain terminators. Also involved in ribosomal RNA transcriptional antitermination. The polypeptide is Transcription termination/antitermination protein NusG (Shigella flexneri).